Consider the following 311-residue polypeptide: Malate dehydrogenase (311 aa).

Residues glycine 7–glycine 13 and aspartate 34 contribute to the NAD(+) site. Substrate is bound by residues arginine 81 and arginine 87. NAD(+) is bound by residues asparagine 94 and isoleucine 117–asparagine 119. Substrate-binding residues include asparagine 119 and arginine 153. Histidine 177 serves as the catalytic Proton acceptor. Residue methionine 227 participates in NAD(+) binding.

It belongs to the LDH/MDH superfamily. MDH type 1 family. Homodimer.

The enzyme catalyses (S)-malate + NAD(+) = oxaloacetate + NADH + H(+). Functionally, catalyzes the reversible oxidation of malate to oxaloacetate. This Yersinia enterocolitica serotype O:8 / biotype 1B (strain NCTC 13174 / 8081) protein is Malate dehydrogenase.